The sequence spans 320 residues: UDP-3-O-acyl-N-acetylglucosamine deacetylase (320 aa).

The Zn(2+) site is built by histidine 92, histidine 251, and aspartate 255. Histidine 278 acts as the Proton donor in catalysis.

It belongs to the LpxC family. Zn(2+) is required as a cofactor.

The catalysed reaction is a UDP-3-O-[(3R)-3-hydroxyacyl]-N-acetyl-alpha-D-glucosamine + H2O = a UDP-3-O-[(3R)-3-hydroxyacyl]-alpha-D-glucosamine + acetate. It functions in the pathway glycolipid biosynthesis; lipid IV(A) biosynthesis; lipid IV(A) from (3R)-3-hydroxytetradecanoyl-[acyl-carrier-protein] and UDP-N-acetyl-alpha-D-glucosamine: step 2/6. Functionally, catalyzes the hydrolysis of UDP-3-O-myristoyl-N-acetylglucosamine to form UDP-3-O-myristoylglucosamine and acetate, the committed step in lipid A biosynthesis. The protein is UDP-3-O-acyl-N-acetylglucosamine deacetylase of Psychrobacter arcticus (strain DSM 17307 / VKM B-2377 / 273-4).